The primary structure comprises 126 residues: SH2 domain-containing protein 1A (126 aa).

One can recognise an SH2 domain in the interval 6 to 102 (VYHGKISREM…GIVTPLQYPV (97 aa)). An interaction with FYN SH3 domain region spans residues 67-92 (ETAPGVHKRFFRKVKNLISAFQKPDQ). K89 carries the post-translational modification N6-acetyllysine. A disordered region spans residues 100 to 126 (YPVEKSSARSPQAPTGRRDSDICLKAP). Positions 115 to 126 (GRRDSDICLKAP) are enriched in basic and acidic residues. Phosphoserine is present on S119.

As to quaternary structure, interacts with CD84, CD244, LY9, SLAMF1 and FYN. Interacts with NTRK1, NTRK2 and NTRK3.

It localises to the cytoplasm. Its function is as follows. Cytoplasmic adapter regulating receptors of the signaling lymphocytic activation molecule (SLAM) family such as SLAMF1, CD244, LY9, CD84, SLAMF6 and SLAMF7. In SLAM signaling seems to cooperate with SH2D1B/EAT-2. Initially it has been proposed that association with SLAMF1 prevents SLAMF1 binding to inhibitory effectors including INPP5D/SHIP1 and PTPN11/SHP-2. However, by simultaneous interactions, recruits FYN which subsequently phosphorylates and activates SLAMF1. Positively regulates CD244/2B4- and CD84-mediated natural killer (NK) cell functions. Can also promote CD48-, SLAMF6 -, LY9-, and SLAMF7-mediated NK cell activation. In the context of NK cell-mediated cytotoxicity enhances conjugate formation with target cells. May also regulate the activity of the neurotrophin receptors NTRK1, NTRK2 and NTRK3. The polypeptide is SH2 domain-containing protein 1A (Sh2d1a) (Rattus norvegicus (Rat)).